A 207-amino-acid polypeptide reads, in one-letter code: p-benzoquinone reductase (207 aa).

The region spanning 5–196 (IQIVFYSSYG…QIARFQGKHV (192 aa)) is the Flavodoxin-like domain. FMN-binding positions include 11–16 (SSYGHI), 84–86 (TRF), 119–125 (STASQHG), and His-140. NADP(+) is bound at residue Tyr-13.

The protein belongs to the WrbA family. In terms of assembly, homodimer. The cofactor is FMN.

It catalyses the reaction 1,4-benzoquinone + NADPH + H(+) = hydroquinone + NADP(+). It functions in the pathway xenobiotic degradation; 4-nitrophenol degradation. In terms of biological role, involved in the degradation of para-nitrophenol (PNP). Catalyzes the reduction of p-benzoquinone to hydroquinone. In Pseudomonas sp. (strain WBC-3), this protein is p-benzoquinone reductase (pnpB).